Consider the following 581-residue polypeptide: MAAVTSSCSTAISASSKTLAKPVAASFAPTNLSFSKLSPQSIRARRSITVGSALGATKVSAPPATHPVSLDFETSVFKKERVNLAGHEEYIVRGGRDLFHLLPDAFKGIKQIGVIGWGSQGPAQAQNLRDSLVEAKSDIVVKVGLRKGSSSFNEAREAGFSEEKGTLGDIWETISGSDLVLLLISDSAQADNYEKIFSHLKPNSILGLSHGFLLGHLQSIGLDFPKNFSVIAVCPKGMGPSVRRLYVQGKEINGAGINSSFGVHQDVDGRATNVALGWSVALGSPFTFATTLEQEYKSDIFGERGILLGAVHGIVESLFRRYTENGMSEDLAYKNTVESITGVISKTISTQGMLAVYNALSEDGKKEFEKAYSASFYPCMEILYECYEDVASGSEIRSVVLAGRRFYEKEGLPAFPMGKIDQTRMWKVGERVRSTRPAGDLGPLYPFTAGVFVAMMMAQIEVLRKKGHSYSEIINESVIESVDSLNPFMHARGVSFMVDNCSTTARLGSRKWAPRFDYILTQQALVAVDSGAPINQDLISNFVSDPVHGAIQVCAELRPTLDISVPAAADFVRPELRQCSN.

A chloroplast-targeting transit peptide spans 1-50 (MAAVTSSCSTAISASSKTLAKPVAASFAPTNLSFSKLSPQSIRARRSITV). Residues 92–290 (VRGGRDLFHL…ALGSPFTFAT (199 aa)) enclose the KARI N-terminal Rossmann domain. Residues 113-120 (GVIGWGSQ), 146-151 (RKGSSS), and 185-189 (SDSAQ) contribute to the NADP(+) site. His210 is an active-site residue. 2 KARI C-terminal knotted domains span residues 291-439 (TLEQ…RPAG) and 440-576 (DLGP…RPEL). Mg(2+) is bound by residues Asp299, Glu303, Glu476, and Glu480. Ser502 lines the substrate pocket.

The protein belongs to the ketol-acid reductoisomerase family. In terms of assembly, homodimer. Mg(2+) is required as a cofactor.

It localises to the plastid. The protein resides in the chloroplast. The enzyme catalyses (2R)-2,3-dihydroxy-3-methylbutanoate + NADP(+) = (2S)-2-acetolactate + NADPH + H(+). It carries out the reaction (2R,3R)-2,3-dihydroxy-3-methylpentanoate + NADP(+) = (S)-2-ethyl-2-hydroxy-3-oxobutanoate + NADPH + H(+). It participates in amino-acid biosynthesis; L-isoleucine biosynthesis; L-isoleucine from 2-oxobutanoate: step 2/4. Its pathway is amino-acid biosynthesis; L-valine biosynthesis; L-valine from pyruvate: step 2/4. In Pisum sativum (Garden pea), this protein is Ketol-acid reductoisomerase, chloroplastic (PGAAIR).